We begin with the raw amino-acid sequence, 477 residues long: Glycogen synthase (477 aa).

Residue Lys15 participates in ADP-alpha-D-glucose binding.

It belongs to the glycosyltransferase 1 family. Bacterial/plant glycogen synthase subfamily.

The enzyme catalyses [(1-&gt;4)-alpha-D-glucosyl](n) + ADP-alpha-D-glucose = [(1-&gt;4)-alpha-D-glucosyl](n+1) + ADP + H(+). It functions in the pathway glycan biosynthesis; glycogen biosynthesis. Functionally, synthesizes alpha-1,4-glucan chains using ADP-glucose. This chain is Glycogen synthase, found in Shigella sonnei (strain Ss046).